The primary structure comprises 529 residues: Bifunctional purine biosynthesis protein PurH (529 aa).

In terms of domain architecture, MGS-like spans 1–148; that stretch reads MQQRRPIRRA…KNHKDVAIVV (148 aa).

It belongs to the PurH family.

The enzyme catalyses (6R)-10-formyltetrahydrofolate + 5-amino-1-(5-phospho-beta-D-ribosyl)imidazole-4-carboxamide = 5-formamido-1-(5-phospho-D-ribosyl)imidazole-4-carboxamide + (6S)-5,6,7,8-tetrahydrofolate. The catalysed reaction is IMP + H2O = 5-formamido-1-(5-phospho-D-ribosyl)imidazole-4-carboxamide. The protein operates within purine metabolism; IMP biosynthesis via de novo pathway; 5-formamido-1-(5-phospho-D-ribosyl)imidazole-4-carboxamide from 5-amino-1-(5-phospho-D-ribosyl)imidazole-4-carboxamide (10-formyl THF route): step 1/1. Its pathway is purine metabolism; IMP biosynthesis via de novo pathway; IMP from 5-formamido-1-(5-phospho-D-ribosyl)imidazole-4-carboxamide: step 1/1. This chain is Bifunctional purine biosynthesis protein PurH, found in Yersinia pseudotuberculosis serotype O:1b (strain IP 31758).